The primary structure comprises 426 residues: MNQLRLEPIKKVSGTINIPGSKSISNRALLLATLAEGTTTLTNLLDSDDIRYMLASLKQLGVSYRLSNNNTVCELDGLAGPLNASEAQTLFLGNAGTAMRPLCAALTLGQGDFTLTGEPRMEERPIGDLVDALRQLGAEVSYLKNDGFPPLSISSTGLNGGNVEIAGDLSSQFLTALLMVAPLAKDDVNIQIKGELVSKPYIDITLALMAQFGVKVQNNDYASFVIKAGQRYVSPGKVLVEGDASSASYFLAAGAIQGGEVKVTGVGKLSIQGDVKFADVLQQMGAEIEWGDDYIISRGAKLTAVDLDMNHIPDAAMTIATTALFATGTTHIRNIYNWRIKETDRLAAMATELRKVGAIVDEGHDYISVTPPAELNTAAIDTYSDHRMAMCFSMMAFADCGITINEPECTSKTFPDYFNQFNSLAH.

The 3-phosphoshikimate site is built by Lys22, Ser23, and Arg27. Lys22 contributes to the phosphoenolpyruvate binding site. Residues Gly96 and Arg124 each contribute to the phosphoenolpyruvate site. Ser170, Ser171, Gln172, Ser198, Asp314, Asn337, and Lys341 together coordinate 3-phosphoshikimate. Gln172 is a binding site for phosphoenolpyruvate. Residue Asp314 is the Proton acceptor of the active site. Phosphoenolpyruvate contacts are provided by Arg345, Arg387, and Lys412.

Belongs to the EPSP synthase family. In terms of assembly, monomer.

It localises to the cytoplasm. The enzyme catalyses 3-phosphoshikimate + phosphoenolpyruvate = 5-O-(1-carboxyvinyl)-3-phosphoshikimate + phosphate. It participates in metabolic intermediate biosynthesis; chorismate biosynthesis; chorismate from D-erythrose 4-phosphate and phosphoenolpyruvate: step 6/7. Catalyzes the transfer of the enolpyruvyl moiety of phosphoenolpyruvate (PEP) to the 5-hydroxyl of shikimate-3-phosphate (S3P) to produce enolpyruvyl shikimate-3-phosphate and inorganic phosphate. The sequence is that of 3-phosphoshikimate 1-carboxyvinyltransferase from Shewanella pealeana (strain ATCC 700345 / ANG-SQ1).